Consider the following 315-residue polypeptide: Methionyl-tRNA formyltransferase (315 aa).

(6S)-5,6,7,8-tetrahydrofolate is bound at residue 113–116 (SLLP).

Belongs to the Fmt family.

The enzyme catalyses L-methionyl-tRNA(fMet) + (6R)-10-formyltetrahydrofolate = N-formyl-L-methionyl-tRNA(fMet) + (6S)-5,6,7,8-tetrahydrofolate + H(+). Its function is as follows. Attaches a formyl group to the free amino group of methionyl-tRNA(fMet). The formyl group appears to play a dual role in the initiator identity of N-formylmethionyl-tRNA by promoting its recognition by IF2 and preventing the misappropriation of this tRNA by the elongation apparatus. In Enterobacter sp. (strain 638), this protein is Methionyl-tRNA formyltransferase.